A 184-amino-acid polypeptide reads, in one-letter code: Adenine phosphoribosyltransferase (184 aa).

The protein belongs to the purine/pyrimidine phosphoribosyltransferase family. Homodimer.

Its subcellular location is the cytoplasm. The enzyme catalyses AMP + diphosphate = 5-phospho-alpha-D-ribose 1-diphosphate + adenine. The protein operates within purine metabolism; AMP biosynthesis via salvage pathway; AMP from adenine: step 1/1. Its function is as follows. Catalyzes a salvage reaction resulting in the formation of AMP, that is energically less costly than de novo synthesis. In Blochmanniella pennsylvanica (strain BPEN), this protein is Adenine phosphoribosyltransferase.